Here is a 155-residue protein sequence, read N- to C-terminus: Small ribosomal subunit protein uS7 (155 aa).

The protein belongs to the universal ribosomal protein uS7 family. Part of the 30S ribosomal subunit. Contacts proteins S9 and S11.

Its function is as follows. One of the primary rRNA binding proteins, it binds directly to 16S rRNA where it nucleates assembly of the head domain of the 30S subunit. Is located at the subunit interface close to the decoding center, probably blocks exit of the E-site tRNA. The protein is Small ribosomal subunit protein uS7 of Corynebacterium efficiens (strain DSM 44549 / YS-314 / AJ 12310 / JCM 11189 / NBRC 100395).